Here is a 117-residue protein sequence, read N- to C-terminus: Large ribosomal subunit protein bL17 (117 aa).

It belongs to the bacterial ribosomal protein bL17 family. As to quaternary structure, part of the 50S ribosomal subunit. Contacts protein L32.

In Campylobacter jejuni subsp. jejuni serotype O:6 (strain 81116 / NCTC 11828), this protein is Large ribosomal subunit protein bL17.